Here is a 264-residue protein sequence, read N- to C-terminus: Thymidylate synthase (264 aa).

Arg21 serves as a coordination point for dUMP. His51 lines the (6R)-5,10-methylene-5,6,7,8-tetrahydrofolate pocket. 126–127 (RR) lines the dUMP pocket. Cys146 functions as the Nucleophile in the catalytic mechanism. Residues 166–169 (RSGD), Asn177, and 207–209 (HLY) contribute to the dUMP site. Asp169 is a binding site for (6R)-5,10-methylene-5,6,7,8-tetrahydrofolate. Ala263 is a (6R)-5,10-methylene-5,6,7,8-tetrahydrofolate binding site.

This sequence belongs to the thymidylate synthase family. Bacterial-type ThyA subfamily. In terms of assembly, homodimer.

The protein localises to the cytoplasm. The enzyme catalyses dUMP + (6R)-5,10-methylene-5,6,7,8-tetrahydrofolate = 7,8-dihydrofolate + dTMP. The protein operates within pyrimidine metabolism; dTTP biosynthesis. Its function is as follows. Catalyzes the reductive methylation of 2'-deoxyuridine-5'-monophosphate (dUMP) to 2'-deoxythymidine-5'-monophosphate (dTMP) while utilizing 5,10-methylenetetrahydrofolate (mTHF) as the methyl donor and reductant in the reaction, yielding dihydrofolate (DHF) as a by-product. This enzymatic reaction provides an intracellular de novo source of dTMP, an essential precursor for DNA biosynthesis. In Xanthomonas campestris pv. campestris (strain 8004), this protein is Thymidylate synthase.